Reading from the N-terminus, the 60-residue chain is ATP synthase subunit J, mitochondrial (60 aa).

A helical membrane pass occupies residues 13 to 32 (ILKPMLPFFLGGAIVFYGTV).

Belongs to the ATPase j subunit family. F-type ATPases have 2 components, CF(1) - the catalytic core - and CF(0) - the membrane proton channel. In yeast, the dimeric form of ATP synthase consists of 17 polypeptides: alpha, beta, gamma, delta, epsilon, 4 (B), 5 (OSCP), 6 (A), 8, 9 (C), d, E (Tim11), f, g, h, i/j and k.

The protein localises to the mitochondrion membrane. Functionally, mitochondrial membrane ATP synthase (F(1)F(0) ATP synthase or Complex V) produces ATP from ADP in the presence of a proton gradient across the membrane which is generated by electron transport complexes of the respiratory chain. F-type ATPases consist of two structural domains, F(1) - containing the extramembraneous catalytic core and F(0) - containing the membrane proton channel, linked together by a central stalk and a peripheral stalk. During catalysis, ATP synthesis in the catalytic domain of F(1) is coupled via a rotary mechanism of the central stalk subunits to proton translocation. Part of the complex F(0) domain. Minor subunit located with subunit a in the membrane. The protein is ATP synthase subunit J, mitochondrial (atp18) of Schizosaccharomyces pombe (strain 972 / ATCC 24843) (Fission yeast).